Reading from the N-terminus, the 385-residue chain is Anhydro-N-acetylmuramic acid kinase (385 aa).

12–19 serves as a coordination point for ATP; sequence GTSLDGID.

Belongs to the anhydro-N-acetylmuramic acid kinase family.

It catalyses the reaction 1,6-anhydro-N-acetyl-beta-muramate + ATP + H2O = N-acetyl-D-muramate 6-phosphate + ADP + H(+). It functions in the pathway amino-sugar metabolism; 1,6-anhydro-N-acetylmuramate degradation. The protein operates within cell wall biogenesis; peptidoglycan recycling. Functionally, catalyzes the specific phosphorylation of 1,6-anhydro-N-acetylmuramic acid (anhMurNAc) with the simultaneous cleavage of the 1,6-anhydro ring, generating MurNAc-6-P. Is required for the utilization of anhMurNAc either imported from the medium or derived from its own cell wall murein, and thus plays a role in cell wall recycling. This chain is Anhydro-N-acetylmuramic acid kinase, found in Bacillus thuringiensis (strain Al Hakam).